Consider the following 233-residue polypeptide: 27 kDa hemolymph glycoprotein (233 aa).

The signal sequence occupies residues 1 to 17 (MIWKTLIVAFMATAVLA). Residues Asn-125 and Asn-156 are each glycosylated (N-linked (GlcNAc...) asparagine).

It belongs to the UPF0408 family. Post-translationally, N-glycosylated. Hemolymph.

Its subcellular location is the secreted. This Manduca sexta (Tobacco hawkmoth) protein is 27 kDa hemolymph glycoprotein.